The chain runs to 208 residues: Uracil phosphoribosyltransferase (208 aa).

5-phospho-alpha-D-ribose 1-diphosphate is bound by residues Arg-77, Arg-102, and 129 to 137 (DPMLATGNS). Residues Ile-193 and 198–200 (GDA) contribute to the uracil site. Position 199 (Asp-199) interacts with 5-phospho-alpha-D-ribose 1-diphosphate.

This sequence belongs to the UPRTase family. Mg(2+) is required as a cofactor.

The enzyme catalyses UMP + diphosphate = 5-phospho-alpha-D-ribose 1-diphosphate + uracil. It participates in pyrimidine metabolism; UMP biosynthesis via salvage pathway; UMP from uracil: step 1/1. With respect to regulation, allosterically activated by GTP. In terms of biological role, catalyzes the conversion of uracil and 5-phospho-alpha-D-ribose 1-diphosphate (PRPP) to UMP and diphosphate. The sequence is that of Uracil phosphoribosyltransferase from Mycoplasmopsis agalactiae (strain NCTC 10123 / CIP 59.7 / PG2) (Mycoplasma agalactiae).